Consider the following 757-residue polypeptide: MSSSFLSSTAFFLLLCLGFCHVSSSSSDQGTYIVHMAKSQMPSSFDLHSNWYDSSLRSISDSAELLYTYENAIHGFSTRLTQEEADSLMTQPGVISVLPEHRYELHTTRTPLFLGLDEHTADLFPEAGSYSDVVVGVLDTGVWPESKSYSDEGFGPIPSSWKGGCEAGTNFTASLCNRKLIGARFFARGYESTMGPIDESKESRSPRDDDGHGTHTSSTAAGSVVEGASLLGYASGTARGMAPRARVAVYKVCWLGGCFSSDILAAIDKAIADNVNVLSMSLGGGMSDYYRDGVAIGAFAAMERGILVSCSAGNAGPSSSSLSNVAPWITTVGAGTLDRDFPALAILGNGKNFTGVSLFKGEALPDKLLPFIYAGNASNATNGNLCMTGTLIPEKVKGKIVMCDRGINARVQKGDVVKAAGGVGMILANTAANGEELVADAHLLPATTVGEKAGDIIRHYVTTDPNPTASISILGTVVGVKPSPVVAAFSSRGPNSITPNILKPDLIAPGVNILAAWTGAAGPTGLASDSRRVEFNIISGTSMSCPHVSGLAALLKSVHPEWSPAAIRSALMTTAYKTYKDGKPLLDIATGKPSTPFDHGAGHVSPTTATNPGLIYDLTTEDYLGFLCALNYTSPQIRSVSRRNYTCDPSKSYSVADLNYPSFAVNVDGVGAYKYTRTVTSVGGAGTYSVKVTSETTGVKISVEPAVLNFKEANEKKSYTVTFTVDSSKPSGSNSFGSIEWSDGKHVVGSPVAISWT.

Residues 1-24 form the signal peptide; sequence MSSSFLSSTAFFLLLCLGFCHVSS. Residues 25-106 constitute a propeptide that is removed on maturation; it reads SSSDQGTYIV…VLPEHRYELH (82 aa). One can recognise an Inhibitor I9 domain in the interval 31–106; sequence TYIVHMAKSQ…VLPEHRYELH (76 aa). The 509-residue stretch at 102–610 folds into the Peptidase S8 domain; that stretch reads RYELHTTRTP…AGHVSPTTAT (509 aa). D139 functions as the Charge relay system in the catalytic mechanism. N-linked (GlcNAc...) asparagine glycosylation is present at N170. The interval 196–219 is disordered; sequence PIDESKESRSPRDDDGHGTHTSST. The segment covering 198–213 has biased composition (basic and acidic residues); that stretch reads DESKESRSPRDDDGHG. The active-site Charge relay system is H212. N-linked (GlcNAc...) asparagine glycosylation is found at N352, N376, and N379. S542 serves as the catalytic Charge relay system. N631 and N644 each carry an N-linked (GlcNAc...) asparagine glycan.

The protein belongs to the peptidase S8 family. As to expression, expressed in immature siliques and at lower levels in stems and flowers. Widely expressed at low levels.

The protein resides in the secreted. Its subcellular location is the cell wall. Activated by calcium. Inhibited by the serine protease inhibitors 4-(2-aminoethyl)benzenesulphonyl fluoride (AEBSF), PMSF, di-isopropyl phosphofluoridate (DFP) and soybean trypsin inhibitor (SBTI). Not inhibited by benzamidine or iodoacetamide. Leupeptin and pepstatin A have a minor inhibitory action. Its function is as follows. Serine protease. Has a substrate preference for the hydrophobic residues Phe and Ala and the basic residue Asp in the P1 position, and for Asp, Leu or Ala in the P1' position. Essential for mucilage release from seed coats. Triggers the accumulation and/or activation of cell wall modifying enzymes necessary either for the loosening of the outer primary cell wall, or to facilitate swelling of the mucilage. The protein is Subtilisin-like protease SBT1.7 of Arabidopsis thaliana (Mouse-ear cress).